Here is a 232-residue protein sequence, read N- to C-terminus: Uracil-DNA glycosylase (232 aa).

Aspartate 70 serves as the catalytic Proton acceptor.

It belongs to the uracil-DNA glycosylase (UDG) superfamily. UNG family.

It localises to the cytoplasm. It catalyses the reaction Hydrolyzes single-stranded DNA or mismatched double-stranded DNA and polynucleotides, releasing free uracil.. Functionally, excises uracil residues from the DNA which can arise as a result of misincorporation of dUMP residues by DNA polymerase or due to deamination of cytosine. The sequence is that of Uracil-DNA glycosylase from Campylobacter fetus subsp. fetus (strain 82-40).